The sequence spans 473 residues: Aspartyl/glutamyl-tRNA(Asn/Gln) amidotransferase subunit B (473 aa).

The protein belongs to the GatB/GatE family. GatB subfamily. Heterotrimer of A, B and C subunits.

The catalysed reaction is L-glutamyl-tRNA(Gln) + L-glutamine + ATP + H2O = L-glutaminyl-tRNA(Gln) + L-glutamate + ADP + phosphate + H(+). It carries out the reaction L-aspartyl-tRNA(Asn) + L-glutamine + ATP + H2O = L-asparaginyl-tRNA(Asn) + L-glutamate + ADP + phosphate + 2 H(+). Functionally, allows the formation of correctly charged Asn-tRNA(Asn) or Gln-tRNA(Gln) through the transamidation of misacylated Asp-tRNA(Asn) or Glu-tRNA(Gln) in organisms which lack either or both of asparaginyl-tRNA or glutaminyl-tRNA synthetases. The reaction takes place in the presence of glutamine and ATP through an activated phospho-Asp-tRNA(Asn) or phospho-Glu-tRNA(Gln). In Sulfurisphaera tokodaii (strain DSM 16993 / JCM 10545 / NBRC 100140 / 7) (Sulfolobus tokodaii), this protein is Aspartyl/glutamyl-tRNA(Asn/Gln) amidotransferase subunit B.